A 277-amino-acid polypeptide reads, in one-letter code: Urease accessory protein UreD (277 aa).

It belongs to the UreD family. As to quaternary structure, ureD, UreF and UreG form a complex that acts as a GTP-hydrolysis-dependent molecular chaperone, activating the urease apoprotein by helping to assemble the nickel containing metallocenter of UreC. The UreE protein probably delivers the nickel.

The protein localises to the cytoplasm. Required for maturation of urease via the functional incorporation of the urease nickel metallocenter. In Yersinia pestis bv. Antiqua (strain Antiqua), this protein is Urease accessory protein UreD.